The primary structure comprises 288 residues: MTALQDMAKAQLVLPAPAKLNLMLHILGRRPDGYHELQTLFQFLDYGDELGFTVREDGEIRLQTDVPGVPHDSNLIVKAARALQKQSGCTLGMDIWLEKRLPMGGGIGGGSSDAATTLLALNHLWQLGWDEDRLAQLGLTLGADVPVFVRGHAAFAEGVGEILTPVDPEEPWYLVLVPQVAVSTAEIFSDPLLTRDTPPIKVRPVPKGNSRNDCKAVVERRYPEVRNALNLLGNFTEAKLTGTGSCVFGAFPNKAEADKVSALLTETLTGFVAKGSNISMLHRKLQIL.

Residue lysine 19 is part of the active site. 102-112 contacts ATP; that stretch reads PMGGGIGGGSS. Residue aspartate 144 is part of the active site.

This sequence belongs to the GHMP kinase family. IspE subfamily.

The catalysed reaction is 4-CDP-2-C-methyl-D-erythritol + ATP = 4-CDP-2-C-methyl-D-erythritol 2-phosphate + ADP + H(+). It participates in isoprenoid biosynthesis; isopentenyl diphosphate biosynthesis via DXP pathway; isopentenyl diphosphate from 1-deoxy-D-xylulose 5-phosphate: step 3/6. Its function is as follows. Catalyzes the phosphorylation of the position 2 hydroxy group of 4-diphosphocytidyl-2C-methyl-D-erythritol. The chain is 4-diphosphocytidyl-2-C-methyl-D-erythritol kinase from Pseudomonas savastanoi pv. phaseolicola (strain 1448A / Race 6) (Pseudomonas syringae pv. phaseolicola (strain 1448A / Race 6)).